A 424-amino-acid polypeptide reads, in one-letter code: FeMo cofactor biosynthesis protein NifB (424 aa).

The region spanning 12–261 is the Radical SAM core domain; the sequence is NDSSRHTYGR…PQMKHCARCR (250 aa). Positions 30, 34, and 37 each coordinate [4Fe-4S] cluster. Gly84, Thr136, and Val188 together coordinate S-adenosyl-L-methionine. Positions 257 and 260 each coordinate [4Fe-4S] cluster.

It belongs to the radical SAM superfamily. NifB family. Monomer. The cofactor is [4Fe-4S] cluster.

Its pathway is cofactor biosynthesis; Fe-Mo cofactor biosynthesis. In terms of biological role, involved in the biosynthesis of the iron-molybdenum cofactor (FeMo-co or M-cluster) found in the dinitrogenase enzyme of the nitrogenase complex in nitrogen-fixing microorganisms. NifB catalyzes the crucial step of radical SAM-dependent carbide insertion that occurs concomitant with the insertion of a 9th sulfur and the rearrangement/coupling of two [4Fe-4S] clusters into a [8Fe-9S-C] cluster, the precursor to the M-cluster. This Chlorobaculum tepidum (strain ATCC 49652 / DSM 12025 / NBRC 103806 / TLS) (Chlorobium tepidum) protein is FeMo cofactor biosynthesis protein NifB.